The primary structure comprises 477 residues: Probable malate:quinone oxidoreductase (477 aa).

Belongs to the MQO family. FAD is required as a cofactor.

The catalysed reaction is (S)-malate + a quinone = a quinol + oxaloacetate. It participates in carbohydrate metabolism; tricarboxylic acid cycle; oxaloacetate from (S)-malate (quinone route): step 1/1. This is Probable malate:quinone oxidoreductase from Synechococcus sp. (strain RCC307).